A 246-amino-acid chain; its full sequence is Putative KilA-N domain-containing protein L33 (246 aa).

Residues 20–129 form the KilA-N domain; the sequence is RYTKCQYCDI…AKVSLWIEEW (110 aa).

The polypeptide is Putative KilA-N domain-containing protein L33 (Acanthamoeba polyphaga mimivirus (APMV)).